We begin with the raw amino-acid sequence, 177 residues long: CASP-like protein 2U1 (177 aa).

The chain crosses the membrane as a helical span at residues 1 to 21 (MVLRIVASLLSIAALVLMAKD). Over 22-48 (KQVVYLNLAGEELTLEAKHSYVEAFVY) the chain is Cytoplasmic. A helical transmembrane segment spans residues 49–69 (LVYSNGLVAIYCFLLVFALVF). Over 70-80 (RLIDKAGCGKS) the chain is Extracellular. A helical membrane pass occupies residues 81–101 (AAWIIFLLDQGLAYVLLAAAA). The Cytoplasmic segment spans residues 102–131 (ASTEVAYVAKRGNNKVGWSEVCSTFGHFCN). The chain crosses the membrane as a helical span at residues 132–152 (LVGVSIVITFISVLAMATLSV). The Extracellular segment spans residues 153–177 (MSARRLFKTYGPERKQISSNDAPAI).

It belongs to the Casparian strip membrane proteins (CASP) family. As to quaternary structure, homodimer and heterodimers.

The protein localises to the cell membrane. This chain is CASP-like protein 2U1, found in Osmunda lancea (Fern).